Consider the following 501-residue polypeptide: Cobyric acid synthase (501 aa).

The GATase cobBQ-type domain maps to 252–443 (DLDVAVIDLD…LHGIFDNPYW (192 aa)). Cysteine 333 acts as the Nucleophile in catalysis. Histidine 435 is an active-site residue.

This sequence belongs to the CobB/CobQ family. CobQ subfamily.

It functions in the pathway cofactor biosynthesis; adenosylcobalamin biosynthesis. In terms of biological role, catalyzes amidations at positions B, D, E, and G on adenosylcobyrinic A,C-diamide. NH(2) groups are provided by glutamine, and one molecule of ATP is hydrogenolyzed for each amidation. The protein is Cobyric acid synthase of Limosilactobacillus reuteri (strain DSM 20016) (Lactobacillus reuteri).